A 176-amino-acid polypeptide reads, in one-letter code: tRNA (cytidine(56)-2'-O)-methyltransferase (176 aa).

Residues Leu86 and 111-115 each bind S-adenosyl-L-methionine; that span reads GAEKV.

The protein belongs to the aTrm56 family. As to quaternary structure, homodimer.

It localises to the cytoplasm. The enzyme catalyses cytidine(56) in tRNA + S-adenosyl-L-methionine = 2'-O-methylcytidine(56) in tRNA + S-adenosyl-L-homocysteine + H(+). Functionally, specifically catalyzes the AdoMet-dependent 2'-O-ribose methylation of cytidine at position 56 in tRNAs. This Methanoregula boonei (strain DSM 21154 / JCM 14090 / 6A8) protein is tRNA (cytidine(56)-2'-O)-methyltransferase.